Consider the following 42-residue polypeptide: Photosystem II reaction center protein J (42 aa).

Residues 10–30 form a helical membrane-spanning segment; it reads IPLWLVGTVAGTAAIGLLGIF.

This sequence belongs to the PsbJ family. As to quaternary structure, PSII is composed of 1 copy each of membrane proteins PsbA, PsbB, PsbC, PsbD, PsbE, PsbF, PsbH, PsbI, PsbJ, PsbK, PsbL, PsbM, PsbT, PsbX, PsbY, PsbZ, Psb30/Ycf12, at least 3 peripheral proteins of the oxygen-evolving complex and a large number of cofactors. It forms dimeric complexes.

The protein resides in the plastid. It localises to the chloroplast thylakoid membrane. One of the components of the core complex of photosystem II (PSII). PSII is a light-driven water:plastoquinone oxidoreductase that uses light energy to abstract electrons from H(2)O, generating O(2) and a proton gradient subsequently used for ATP formation. It consists of a core antenna complex that captures photons, and an electron transfer chain that converts photonic excitation into a charge separation. This Pleurastrum terricola (Filamentous green alga) protein is Photosystem II reaction center protein J.